We begin with the raw amino-acid sequence, 225 residues long: MSESHIDFRKAEFLISAPDIAHLNEYLPGDVGVEIAFAGRSNAGKSSALNLLTEQKIARTSKTPGRTQLINVFRLDKHRRLVDLPGYGFAQVPLALKLKWQESLGEYLLKRDCLSGVVVLMDIRHPLKDLDMQMIEWAVESHIPVLALLTKADKLGQSARMKMVNEVRKKLSHFEDGVKVEPFSSLKGIGKGKVLGILDSWCKPEWLMQQLEADAIAAQAEADKD.

An EngB-type G domain is found at 31 to 204; that stretch reads VGVEIAFAGR…LGILDSWCKP (174 aa). GTP contacts are provided by residues 39 to 46, 65 to 69, 83 to 86, 150 to 153, and 183 to 185; these read GRSNAGKS, GRTQL, DLPG, TKAD, and FSS. Residues Ser-46 and Thr-67 each coordinate Mg(2+).

Belongs to the TRAFAC class TrmE-Era-EngA-EngB-Septin-like GTPase superfamily. EngB GTPase family. Requires Mg(2+) as cofactor.

In terms of biological role, necessary for normal cell division and for the maintenance of normal septation. This is Probable GTP-binding protein EngB from Shewanella pealeana (strain ATCC 700345 / ANG-SQ1).